We begin with the raw amino-acid sequence, 122 residues long: Large ribosomal subunit protein uL14c (122 aa).

The protein belongs to the universal ribosomal protein uL14 family. As to quaternary structure, part of the 50S ribosomal subunit.

It localises to the plastid. Binds to 23S rRNA. The polypeptide is Large ribosomal subunit protein uL14c (Cuscuta exaltata (Tall dodder)).